Reading from the N-terminus, the 297-residue chain is Protoheme IX farnesyltransferase (297 aa).

Helical transmembrane passes span 16-36, 45-65, 93-113, 114-134, 141-161, 172-192, 223-243, 244-264, and 277-297; these read VVALIVFTALVGMVLAIPGVP, VLGFLGIWLAASAAAAINQLL, VFASVLIVLSMVILVLWVNLI, TAVLTFASLIGYAVIYTVYLK, IVIGGLAGAMPPMLGWAAVTG, SLLVLIIFIWTPPHFWALAIF, VVLALVCLLPYLVGMSGAFYL, GGAIVLNAVFLWYAWRMLDPP, and IVYLMALFAFLLVDHWILPWL.

This sequence belongs to the UbiA prenyltransferase family. Protoheme IX farnesyltransferase subfamily.

Its subcellular location is the cell inner membrane. The catalysed reaction is heme b + (2E,6E)-farnesyl diphosphate + H2O = Fe(II)-heme o + diphosphate. It functions in the pathway porphyrin-containing compound metabolism; heme O biosynthesis; heme O from protoheme: step 1/1. Functionally, converts heme B (protoheme IX) to heme O by substitution of the vinyl group on carbon 2 of heme B porphyrin ring with a hydroxyethyl farnesyl side group. The sequence is that of Protoheme IX farnesyltransferase from Stenotrophomonas maltophilia (strain R551-3).